Consider the following 489-residue polypeptide: 3-octaprenyl-4-hydroxybenzoate carboxy-lyase (489 aa).

Asn-172 provides a ligand contact to Mn(2+). Prenylated FMN contacts are provided by residues 175–177 (IYR), 189–191 (RWL), and 194–195 (RG). Glu-238 is a binding site for Mn(2+). The Proton donor role is filled by Asp-287.

Belongs to the UbiD family. As to quaternary structure, homohexamer. Prenylated FMN serves as cofactor. Requires Mn(2+) as cofactor.

It is found in the cell membrane. The enzyme catalyses a 4-hydroxy-3-(all-trans-polyprenyl)benzoate + H(+) = a 2-(all-trans-polyprenyl)phenol + CO2. It functions in the pathway cofactor biosynthesis; ubiquinone biosynthesis. Its function is as follows. Catalyzes the decarboxylation of 3-octaprenyl-4-hydroxy benzoate to 2-octaprenylphenol, an intermediate step in ubiquinone biosynthesis. In Salmonella paratyphi B (strain ATCC BAA-1250 / SPB7), this protein is 3-octaprenyl-4-hydroxybenzoate carboxy-lyase.